Here is a 665-residue protein sequence, read N- to C-terminus: Methionine--tRNA ligase (665 aa).

The short motif at 12 to 22 is the 'HIGH' region element; that stretch reads YYPSGKLHIGS. The 'KMSKS' region signature appears at 308–312; the sequence is KMSKS. ATP is bound at residue K311. Residues 562–665 enclose the tRNA-binding domain; the sequence is TFDAVEIRVA…SSVPNGSIIG (104 aa).

This sequence belongs to the class-I aminoacyl-tRNA synthetase family. MetG type 2B subfamily. In terms of assembly, homodimer.

The protein localises to the cytoplasm. It carries out the reaction tRNA(Met) + L-methionine + ATP = L-methionyl-tRNA(Met) + AMP + diphosphate. Is required not only for elongation of protein synthesis but also for the initiation of all mRNA translation through initiator tRNA(fMet) aminoacylation. The protein is Methionine--tRNA ligase (metG) of Streptococcus pyogenes serotype M18 (strain MGAS8232).